Reading from the N-terminus, the 270-residue chain is L-fucose dehydrogenase (270 aa).

The NAD(+) site is built by Arg-19, Ile-21, Asp-40, Lys-41, Asp-62, Val-63, Asn-89, Tyr-154, Lys-158, Ile-187, Thr-189, and Leu-191.

It belongs to the short-chain dehydrogenases/reductases (SDR) family.

The catalysed reaction is L-fucose + NAD(+) = L-fucono-1,5-lactone + NADH + H(+). It carries out the reaction D-arabinose + NAD(+) = D-arabinono-1,5-lactone + NADH + H(+). It catalyses the reaction L-galactose + NAD(+) = L-galactono-1,5-lactone + NADH + H(+). Catalyzes the NAD(+)-dependent oxidation of L-fucose, yielding L-fucono-1,5-lactone, which rapidly converts spontaneously to L-fucone-1,4-lactone. Does not use NADPH. Displays low activity on L-fucose, D-arabinose and L-galactose compared with rabbit and human. This is consitent with the low L-fucose metabolism observed in this species. In Rattus norvegicus (Rat), this protein is L-fucose dehydrogenase (Hsd17b14).